Consider the following 99-residue polypeptide: NADH-quinone oxidoreductase subunit K (99 aa).

The next 3 membrane-spanning stretches (helical) occupy residues 3–23 (PTYYLLLSALLFSIGAVGVLV), 28–48 (IVVFMCVELMLNAVNLTLVTF), and 59–79 (VMAFFVMVVAAAEVVVGLAII).

The protein belongs to the complex I subunit 4L family. NDH-1 is composed of 14 different subunits. Subunits NuoA, H, J, K, L, M, N constitute the membrane sector of the complex.

It localises to the cell membrane. It carries out the reaction a quinone + NADH + 5 H(+)(in) = a quinol + NAD(+) + 4 H(+)(out). NDH-1 shuttles electrons from NADH, via FMN and iron-sulfur (Fe-S) centers, to quinones in the respiratory chain. The immediate electron acceptor for the enzyme in this species is believed to be a menaquinone. Couples the redox reaction to proton translocation (for every two electrons transferred, four hydrogen ions are translocated across the cytoplasmic membrane), and thus conserves the redox energy in a proton gradient. This chain is NADH-quinone oxidoreductase subunit K, found in Saccharopolyspora erythraea (strain ATCC 11635 / DSM 40517 / JCM 4748 / NBRC 13426 / NCIMB 8594 / NRRL 2338).